The following is a 122-amino-acid chain: Large ribosomal subunit protein uL14 (122 aa).

The protein belongs to the universal ribosomal protein uL14 family. Part of the 50S ribosomal subunit. Forms a cluster with proteins L3 and L19. In the 70S ribosome, L14 and L19 interact and together make contacts with the 16S rRNA in bridges B5 and B8.

In terms of biological role, binds to 23S rRNA. Forms part of two intersubunit bridges in the 70S ribosome. The protein is Large ribosomal subunit protein uL14 of Burkholderia lata (strain ATCC 17760 / DSM 23089 / LMG 22485 / NCIMB 9086 / R18194 / 383).